The chain runs to 371 residues: Queuine tRNA-ribosyltransferase (371 aa).

Residue Asp-90 is the Proton acceptor of the active site. Substrate contacts are provided by residues Asp-90–Phe-94, Asp-144, Gln-188, and Gly-215. The RNA binding stretch occupies residues Gly-246–Asp-252. Asp-265 (nucleophile) is an active-site residue. Residues Thr-270–Arg-274 form an RNA binding; important for wobble base 34 recognition region. Residues Cys-303, Cys-305, Cys-308, and His-334 each coordinate Zn(2+).

It belongs to the queuine tRNA-ribosyltransferase family. As to quaternary structure, homodimer. Within each dimer, one monomer is responsible for RNA recognition and catalysis, while the other monomer binds to the replacement base PreQ1. It depends on Zn(2+) as a cofactor.

It carries out the reaction 7-aminomethyl-7-carbaguanine + guanosine(34) in tRNA = 7-aminomethyl-7-carbaguanosine(34) in tRNA + guanine. The protein operates within tRNA modification; tRNA-queuosine biosynthesis. Functionally, catalyzes the base-exchange of a guanine (G) residue with the queuine precursor 7-aminomethyl-7-deazaguanine (PreQ1) at position 34 (anticodon wobble position) in tRNAs with GU(N) anticodons (tRNA-Asp, -Asn, -His and -Tyr). Catalysis occurs through a double-displacement mechanism. The nucleophile active site attacks the C1' of nucleotide 34 to detach the guanine base from the RNA, forming a covalent enzyme-RNA intermediate. The proton acceptor active site deprotonates the incoming PreQ1, allowing a nucleophilic attack on the C1' of the ribose to form the product. After dissociation, two additional enzymatic reactions on the tRNA convert PreQ1 to queuine (Q), resulting in the hypermodified nucleoside queuosine (7-(((4,5-cis-dihydroxy-2-cyclopenten-1-yl)amino)methyl)-7-deazaguanosine). The polypeptide is Queuine tRNA-ribosyltransferase (Chromobacterium violaceum (strain ATCC 12472 / DSM 30191 / JCM 1249 / CCUG 213 / NBRC 12614 / NCIMB 9131 / NCTC 9757 / MK)).